The chain runs to 131 residues: Norrin (131 aa).

Residues 1–24 form the signal peptide; it reads MRNHVLAASISMLSLLAIMGDTDS. 4 disulfides stabilise this stretch: Cys-37/Cys-94, Cys-53/Cys-108, Cys-63/Cys-124, and Cys-67/Cys-126. The CTCK domain occupies 37-130; it reads CMRHHYVDSI…ILSCHCEECS (94 aa).

As to quaternary structure, homodimer; disulfide-linked. Component of a complex, at least composed of TSPAN12, FZD4, LRP5/6 and norrin (NDP). Binds FZD4 with high affinity. Interacts with LRP6 (via Beta-propellers 1 and 2). In terms of tissue distribution, expressed in the outer nuclear, inner nuclear and ganglion cell layers of the retina.

Its subcellular location is the secreted. Its function is as follows. Activates the canonical Wnt signaling pathway through FZD4 and LRP5 coreceptor. Plays a central role in retinal vascularization by acting as a ligand for FZD4 that signals via stabilizing beta-catenin (CTNNB1) and activating LEF/TCF-mediated transcriptional programs. Acts in concert with TSPAN12 to activate FZD4 independently of the Wnt-dependent activation of FZD4, suggesting the existence of a Wnt-independent signaling that also promote accumulation the beta-catenin (CTNNB1). May be involved in a pathway that regulates neural cell differentiation and proliferation. Possible role in neuroectodermal cell-cell interaction. The chain is Norrin (Ndp) from Mus musculus (Mouse).